A 600-amino-acid polypeptide reads, in one-letter code: Glutamine--fructose-6-phosphate aminotransferase [isomerizing] (600 aa).

Cys-2 serves as the catalytic Nucleophile; for GATase activity. One can recognise a Glutamine amidotransferase type-2 domain in the interval 2 to 217 (CGIVGYIGTE…DEEIVIVTKD (216 aa)). 2 SIS domains span residues 283 to 422 (IRQA…AKGI) and 452 to 590 (IARD…VDKP). Lys-595 (for Fru-6P isomerization activity) is an active-site residue.

As to quaternary structure, homodimer.

It is found in the cytoplasm. It carries out the reaction D-fructose 6-phosphate + L-glutamine = D-glucosamine 6-phosphate + L-glutamate. Catalyzes the first step in hexosamine metabolism, converting fructose-6P into glucosamine-6P using glutamine as a nitrogen source. This chain is Glutamine--fructose-6-phosphate aminotransferase [isomerizing], found in Halalkalibacterium halodurans (strain ATCC BAA-125 / DSM 18197 / FERM 7344 / JCM 9153 / C-125) (Bacillus halodurans).